We begin with the raw amino-acid sequence, 687 residues long: POZ (BTB) and AT hook-containing zinc finger 1 (687 aa).

One can recognise a BTB domain in the interval 41–130 (CDVLLRVGDE…AYTSRIVVRL (90 aa)). Residues 250 to 260 (PFPNVASSAPP) are compositionally biased toward polar residues. The disordered stretch occupies residues 250 to 279 (PFPNVASSAPPLTSKRGRGRPRKANLLDSM). The C2H2-type 1 zinc finger occupies 292–314 (LPCGLCGKVFTDANRLRQHEAQH). The interval 332-351 (GENGLPISEDPDGPRKRSRT) is disordered. C2H2-type zinc fingers lie at residues 355-377 (VACE…KLSH), 383-405 (YSCP…VRSH), 413-436 (YICQ…KQVH), 442-464 (HKCQ…LACH), and 495-517 (NFCS…VKTH). The segment at 564-587 (SYGDLSDASDLKTPEKQSANGSFS) is disordered. The segment at 605 to 628 (YPCPECGSFFRSKSYLNKHIQKVH) adopts a C2H2-type 7 zinc-finger fold.

Homodimer. Interacts with RNF4. Interacts (via C-terminus) with TP53; this interaction inhibits TP53 ability to activate transcription. In terms of tissue distribution, widely expressed at high levels during embryogenesis, especially in the central nervous system, especially to the actively proliferating neuroblasts in the periventricular neocortical neuroepithelium, in the telencephalic cortical plate and in the hippocampus. Also expressed in a stage-specific manner in the mouse germinal epithelium. While strongly expressed during brain development,m its expression turns down in adult brain.

Its subcellular location is the nucleus. Transcriptional regulator that plays a role in many biological processes such as embryogenesis, senescence, T-cell development or neurogenesis. Interacts with the TP53 protein to control genes that are important in proliferation and in the DNA-damage response. Mechanistically, the interaction inhibits the DNA binding and transcriptional activity of TP53/p53. Part of the transcriptional network modulating regulatory T-cell development and controls the generation of the regulatory T-cell pool under homeostatic conditions. The sequence is that of POZ (BTB) and AT hook-containing zinc finger 1 from Mus musculus (Mouse).